The chain runs to 391 residues: Multidrug resistance protein MdtL (391 aa).

Transmembrane regions (helical) follow at residues 4–24 (FLIC…MYLV), 42–62 (IAFS…GKVA), 69–89 (PVAI…SLAE), 93–113 (LFLA…VVAF), 131–151 (LLNG…HLIM), 158–178 (SLFW…LFIL), 203–222 (FFLS…LTFV), 245–265 (ALTA…LGIF), 269–289 (TLMI…AVSP), 293–313 (VSLF…GVAM), 331–351 (LGIA…VVGI), and 356–376 (MLIG…MFVA).

The protein belongs to the major facilitator superfamily. DHA1 family. MdtL (TC 2.A.1.2.22) subfamily.

The protein resides in the cell inner membrane. Its function is as follows. Confers resistance to chloramphenicol. In Escherichia coli O17:K52:H18 (strain UMN026 / ExPEC), this protein is Multidrug resistance protein MdtL.